The chain runs to 291 residues: Protein-export membrane protein SecF (291 aa).

The next 6 membrane-spanning stretches (helical) occupy residues 19–39 (LVVIPLIILAVALLIIASWYV), 134–154 (LALGGVGVAFLGMSVLVFLMF), 156–176 (VFVPSIAVVVSAFSDIAISVA), 187–209 (LGTVAALLMIIGYSVDSDILLNN), 226–246 (MRTGVTMTLTSIIAMSVMAAV), and 256–278 (AAIGTVLVFGLIADLMNTYLLNL).

Belongs to the SecD/SecF family. SecF subfamily. Part of the protein translocation apparatus. Forms a complex with SecD.

The protein resides in the cell membrane. In terms of biological role, involved in protein export. The protein is Protein-export membrane protein SecF of Haloquadratum walsbyi (strain DSM 16790 / HBSQ001).